A 335-amino-acid chain; its full sequence is MATFVSELEAAKKNLSEALGDNVKQYWANLKLWFKQKISKEEFDLEAHRLLTQDNVHSHNDFLLAILTRCQILVSTPEGAGSLPWTGGSAAKPGKPKGKKKLSSVRQKFDHRFQPQNPLSGAQQFVAKDPQDDDDLKLCSHTMMLPTRGQLEGRMIVTAYEHGLDNVTEEAVSAVVYAVENHLKDILSSVVSRRKAYRLRDGHFKYAFGSNVTPQPYLKNSVVAYNSLIESPPALSAPFAGQNPASHPPPDDAEQQAALLLACSGDTLPASLPPVNMYDLFEALQVHREVIPTHTVYALNIERIIMKLWHPNHEELQQDKVHRQRLAAKEGLLFC.

It belongs to the TADA1 family. In terms of assembly, component of the STAGA transcription coactivator-HAT complex, at least composed of SUPT3H, GCN5L2, TAF5L, TAF6L, SUPT7L, TADA3L, TAD1L, TAF10, TAF12, TRRAP and TAF9.

It is found in the nucleus. In terms of biological role, probably involved in transcriptional regulation. In Bos taurus (Bovine), this protein is Transcriptional adapter 1 (TADA1).